The sequence spans 185 residues: Elongation factor P (185 aa).

This sequence belongs to the elongation factor P family.

The protein resides in the cytoplasm. The protein operates within protein biosynthesis; polypeptide chain elongation. Functionally, involved in peptide bond synthesis. Stimulates efficient translation and peptide-bond synthesis on native or reconstituted 70S ribosomes in vitro. Probably functions indirectly by altering the affinity of the ribosome for aminoacyl-tRNA, thus increasing their reactivity as acceptors for peptidyl transferase. In Symbiobacterium thermophilum (strain DSM 24528 / JCM 14929 / IAM 14863 / T), this protein is Elongation factor P.